Here is a 692-residue protein sequence, read N- to C-terminus: Proprotein convertase subtilisin/kexin type 9 (692 aa).

A signal peptide spans Met-1–Ala-30. Positions Gln-31–Gln-152 are excised as a propeptide. Residue Tyr-38 is modified to Sulfotyrosine. Ser-47 carries the phosphoserine modification. In terms of domain architecture, Inhibitor I9 spans Thr-77–Val-149. The region spanning Pro-155–Trp-461 is the Peptidase S8 domain. Residues Asp-186 and His-226 each act as charge relay system in the active site. Cystine bridges form between Cys-223–Cys-255 and Cys-323–Cys-358. Residue Ser-386 is the Charge relay system of the active site. The tract at residues Gly-450–Gln-692 is C-terminal domain. 3 disulfide bridges follow: Cys-457/Cys-527, Cys-477/Cys-526, and Cys-486/Cys-509. A glycan (N-linked (GlcNAc...) asparagine) is linked at Asn-533. Disulfide bonds link Cys-534–Cys-601, Cys-552–Cys-600, Cys-562–Cys-588, Cys-608–Cys-679, Cys-626–Cys-678, and Cys-635–Cys-654. Ser-688 is modified (phosphoserine).

This sequence belongs to the peptidase S8 family. In terms of assembly, monomer. Can self-associate to form dimers and higher multimers which may have increased LDLR degrading activity. The precursor protein but not the mature protein may form multimers. Interacts with APOB, VLDLR, LRP8/APOER2 and BACE1. The full-length immature form (pro-PCSK9) interacts with SCNN1A, SCNN1B and SCNN1G. The pro-PCSK9 form (via C-terminal domain) interacts with LDLR. Interacts (via the C-terminal domain) with ANXA2 (via repeat Annexin 1); the interaction inhibits the degradation of LDLR. It depends on Ca(2+) as a cofactor. Post-translationally, cleavage by furin and PCSK5 generates a truncated inactive protein that is unable to induce LDLR degradation. Undergoes autocatalytic cleavage in the endoplasmic reticulum to release the propeptide from the N-terminus and the cleavage of the propeptide is strictly required for its maturation and activation. The cleaved propeptide however remains associated with the catalytic domain through non-covalent interactions, preventing potential substrates from accessing its active site. As a result, it is secreted from cells as a propeptide-containing, enzymatically inactive protein. In terms of processing, phosphorylation protects the propeptide against proteolysis.

The protein localises to the cytoplasm. It localises to the secreted. The protein resides in the endosome. Its subcellular location is the lysosome. It is found in the cell surface. The protein localises to the endoplasmic reticulum. It localises to the golgi apparatus. With respect to regulation, its proteolytic activity is autoinhibited by the non-covalent binding of the propeptide to the catalytic domain. Inhibited by EGTA. Crucial player in the regulation of plasma cholesterol homeostasis. Binds to low-density lipid receptor family members: low density lipoprotein receptor (LDLR), very low density lipoprotein receptor (VLDLR), apolipoprotein E receptor (LRP1/APOER) and apolipoprotein receptor 2 (LRP8/APOER2), and promotes their degradation in intracellular acidic compartments. Acts via a non-proteolytic mechanism to enhance the degradation of the hepatic LDLR through a clathrin LDLRAP1/ARH-mediated pathway. May prevent the recycling of LDLR from endosomes to the cell surface or direct it to lysosomes for degradation. Can induce ubiquitination of LDLR leading to its subsequent degradation. Inhibits intracellular degradation of APOB via the autophagosome/lysosome pathway in a LDLR-independent manner. Involved in the disposal of non-acetylated intermediates of BACE1 in the early secretory pathway. Inhibits epithelial Na(+) channel (ENaC)-mediated Na(+) absorption by reducing ENaC surface expression primarily by increasing its proteasomal degradation. Regulates neuronal apoptosis via modulation of LRP8/APOER2 levels and related anti-apoptotic signaling pathways. This chain is Proprotein convertase subtilisin/kexin type 9 (PCSK9), found in Pan paniscus (Pygmy chimpanzee).